We begin with the raw amino-acid sequence, 504 residues long: 2,3-bisphosphoglycerate-independent phosphoglycerate mutase (504 aa).

Positions 11 and 61 each coordinate Mn(2+). Catalysis depends on S61, which acts as the Phosphoserine intermediate. Residues H122, 152-153, R183, R189, 255-258, and K329 contribute to the substrate site; these read RD and RNDR. Residues D396, H400, D437, H438, and H455 each contribute to the Mn(2+) site.

This sequence belongs to the BPG-independent phosphoglycerate mutase family. In terms of assembly, monomer. Mn(2+) is required as a cofactor.

It carries out the reaction (2R)-2-phosphoglycerate = (2R)-3-phosphoglycerate. Its pathway is carbohydrate degradation; glycolysis; pyruvate from D-glyceraldehyde 3-phosphate: step 3/5. Catalyzes the interconversion of 2-phosphoglycerate and 3-phosphoglycerate. The sequence is that of 2,3-bisphosphoglycerate-independent phosphoglycerate mutase from Bacteroides thetaiotaomicron (strain ATCC 29148 / DSM 2079 / JCM 5827 / CCUG 10774 / NCTC 10582 / VPI-5482 / E50).